Reading from the N-terminus, the 316-residue chain is Homoserine kinase (316 aa).

An ATP-binding site is contributed by 96-106 (PHGRGLGSSGA).

It belongs to the GHMP kinase family. Homoserine kinase subfamily.

The protein resides in the cytoplasm. The catalysed reaction is L-homoserine + ATP = O-phospho-L-homoserine + ADP + H(+). It functions in the pathway amino-acid biosynthesis; L-threonine biosynthesis; L-threonine from L-aspartate: step 4/5. Catalyzes the ATP-dependent phosphorylation of L-homoserine to L-homoserine phosphate. The polypeptide is Homoserine kinase (Clavibacter michiganensis subsp. michiganensis (strain NCPPB 382)).